The following is a 380-amino-acid chain: tRNA (guanine(26)-N(2))-dimethyltransferase (380 aa).

The 373-residue stretch at 2 to 374 (ITVNEGSVTI…AGIGEIEEVL (373 aa)) folds into the Trm1 methyltransferase domain. Residues arginine 35, arginine 65, aspartate 83, aspartate 109, and alanine 110 each coordinate S-adenosyl-L-methionine. Positions 242, 245, 261, and 264 each coordinate Zn(2+).

This sequence belongs to the class I-like SAM-binding methyltransferase superfamily. Trm1 family.

It carries out the reaction guanosine(26) in tRNA + 2 S-adenosyl-L-methionine = N(2)-dimethylguanosine(26) in tRNA + 2 S-adenosyl-L-homocysteine + 2 H(+). Dimethylates a single guanine residue at position 26 of a number of tRNAs using S-adenosyl-L-methionine as donor of the methyl groups. This chain is tRNA (guanine(26)-N(2))-dimethyltransferase, found in Methanothermobacter thermautotrophicus (strain ATCC 29096 / DSM 1053 / JCM 10044 / NBRC 100330 / Delta H) (Methanobacterium thermoautotrophicum).